The chain runs to 148 residues: 3-dehydroquinate dehydratase (148 aa).

Tyr23 acts as the Proton acceptor in catalysis. Substrate-binding residues include Asn75, His81, and Asp88. The active-site Proton donor is His101. Substrate is bound by residues 102-103 and Arg112; that span reads LS.

It belongs to the type-II 3-dehydroquinase family. As to quaternary structure, homododecamer.

It carries out the reaction 3-dehydroquinate = 3-dehydroshikimate + H2O. It functions in the pathway metabolic intermediate biosynthesis; chorismate biosynthesis; chorismate from D-erythrose 4-phosphate and phosphoenolpyruvate: step 3/7. In terms of biological role, catalyzes a trans-dehydration via an enolate intermediate. This is 3-dehydroquinate dehydratase from Xanthomonas campestris pv. campestris (strain B100).